Here is a 450-residue protein sequence, read N- to C-terminus: Serine/threonine-protein kinase SSN3 (450 aa).

The Protein kinase domain occupies 40–393 (YRIIGFISSG…AAQALQSPFF (354 aa)). ATP is bound by residues 46 to 54 (ISSGTYGRV) and lysine 71. The active-site Proton acceptor is aspartate 173. Disordered regions lie at residues 307–341 (ASSHHNHHSHHHPHHHHGHYGSRNPPPPGGSNLEK) and 418–450 (QDDNDIRTSSLPGTKRSGLPDDSLIRPAKRQKE). Residues 310–326 (HHNHHSHHHPHHHHGHY) show a composition bias toward basic residues.

It belongs to the protein kinase superfamily. CMGC Ser/Thr protein kinase family. CDC2/CDKX subfamily. As to quaternary structure, component of the SRB8-11 complex, a regulatory module of the Mediator complex. Interacts with SSN8/FCC1. Mg(2+) is required as a cofactor.

It localises to the nucleus. It carries out the reaction L-seryl-[protein] + ATP = O-phospho-L-seryl-[protein] + ADP + H(+). The catalysed reaction is L-threonyl-[protein] + ATP = O-phospho-L-threonyl-[protein] + ADP + H(+). It catalyses the reaction [DNA-directed RNA polymerase] + ATP = phospho-[DNA-directed RNA polymerase] + ADP + H(+). Component of the SRB8-11 complex. The SRB8-11 complex is a regulatory module of the Mediator complex which is itself involved in regulation of basal and activated RNA polymerase II-dependent transcription. The SRB8-11 complex may be involved in the transcriptional repression of a subset of genes regulated by Mediator. It may inhibit the association of the Mediator complex with RNA polymerase II to form the holoenzyme complex. The SRB8-11 complex phosphorylates the C-terminal domain (CTD) of the largest subunit of RNA polymerase II. Required for normal growth and secondary metabolism. The protein is Serine/threonine-protein kinase SSN3 (SSN3) of Gibberella moniliformis (Maize ear and stalk rot fungus).